The following is a 533-amino-acid chain: D-3-phosphoglycerate dehydrogenase (533 aa).

Ala-2 carries the post-translational modification N-acetylalanine. Ser-14 is modified (phosphoserine). Lys-58 carries the post-translational modification N6-acetyllysine. Residues Thr-78, 155-156 (RI), Asp-175, Thr-207, 234-236 (CAR), and Asp-260 contribute to the NAD(+) site. Residue Thr-78 is modified to Phosphothreonine. Residue Arg-236 is part of the active site. Glu-265 is a catalytic residue. Residue His-283 is the Proton donor of the active site. 283 to 286 (HLGA) serves as a coordination point for NAD(+).

Belongs to the D-isomer specific 2-hydroxyacid dehydrogenase family. In terms of assembly, homotetramer.

It carries out the reaction (2R)-3-phosphoglycerate + NAD(+) = 3-phosphooxypyruvate + NADH + H(+). The enzyme catalyses (R)-2-hydroxyglutarate + NAD(+) = 2-oxoglutarate + NADH + H(+). It catalyses the reaction (S)-malate + NAD(+) = oxaloacetate + NADH + H(+). It participates in amino-acid biosynthesis; L-serine biosynthesis; L-serine from 3-phospho-D-glycerate: step 1/3. Catalyzes the reversible oxidation of 3-phospho-D-glycerate to 3-phosphonooxypyruvate, the first step of the phosphorylated L-serine biosynthesis pathway. Also catalyzes the reversible oxidation of 2-hydroxyglutarate to 2-oxoglutarate and the reversible oxidation of (S)-malate to oxaloacetate. This is D-3-phosphoglycerate dehydrogenase (PHGDH) from Sus scrofa (Pig).